We begin with the raw amino-acid sequence, 425 residues long: Serine--tRNA ligase (425 aa).

T230–E232 is a binding site for L-serine. R261–E263 is a binding site for ATP. E284 contributes to the L-serine binding site. E348 to S351 serves as a coordination point for ATP. S384 serves as a coordination point for L-serine.

It belongs to the class-II aminoacyl-tRNA synthetase family. Type-1 seryl-tRNA synthetase subfamily. As to quaternary structure, homodimer. The tRNA molecule binds across the dimer.

It localises to the cytoplasm. The enzyme catalyses tRNA(Ser) + L-serine + ATP = L-seryl-tRNA(Ser) + AMP + diphosphate + H(+). The catalysed reaction is tRNA(Sec) + L-serine + ATP = L-seryl-tRNA(Sec) + AMP + diphosphate + H(+). It participates in aminoacyl-tRNA biosynthesis; selenocysteinyl-tRNA(Sec) biosynthesis; L-seryl-tRNA(Sec) from L-serine and tRNA(Sec): step 1/1. Its function is as follows. Catalyzes the attachment of serine to tRNA(Ser). Is also able to aminoacylate tRNA(Sec) with serine, to form the misacylated tRNA L-seryl-tRNA(Sec), which will be further converted into selenocysteinyl-tRNA(Sec). This Streptococcus pyogenes serotype M3 (strain SSI-1) protein is Serine--tRNA ligase.